Consider the following 284-residue polypeptide: Bifunctional protein FolD 2 (284 aa).

NADP(+) contacts are provided by residues 165 to 167 (GRG), T192, and V233.

It belongs to the tetrahydrofolate dehydrogenase/cyclohydrolase family. Homodimer.

The enzyme catalyses (6R)-5,10-methylene-5,6,7,8-tetrahydrofolate + NADP(+) = (6R)-5,10-methenyltetrahydrofolate + NADPH. The catalysed reaction is (6R)-5,10-methenyltetrahydrofolate + H2O = (6R)-10-formyltetrahydrofolate + H(+). It functions in the pathway one-carbon metabolism; tetrahydrofolate interconversion. In terms of biological role, catalyzes the oxidation of 5,10-methylenetetrahydrofolate to 5,10-methenyltetrahydrofolate and then the hydrolysis of 5,10-methenyltetrahydrofolate to 10-formyltetrahydrofolate. This Streptomyces avermitilis (strain ATCC 31267 / DSM 46492 / JCM 5070 / NBRC 14893 / NCIMB 12804 / NRRL 8165 / MA-4680) protein is Bifunctional protein FolD 2.